The sequence spans 294 residues: Glycine--tRNA ligase alpha subunit (294 aa).

The protein belongs to the class-II aminoacyl-tRNA synthetase family. As to quaternary structure, tetramer of two alpha and two beta subunits.

It is found in the cytoplasm. It carries out the reaction tRNA(Gly) + glycine + ATP = glycyl-tRNA(Gly) + AMP + diphosphate. In Polynucleobacter asymbioticus (strain DSM 18221 / CIP 109841 / QLW-P1DMWA-1) (Polynucleobacter necessarius subsp. asymbioticus), this protein is Glycine--tRNA ligase alpha subunit.